A 1155-amino-acid chain; its full sequence is Cilia- and flagella-associated protein 251 (1155 aa).

Basic and acidic residues-rich tracts occupy residues 1-19 (MSDA…GETE) and 31-59 (KEVE…KTGE). Disordered stretches follow at residues 1 to 144 (MSDA…KLSL) and 167 to 225 (LDQI…DIQS). Over residues 60–69 (EEGEEEEEKE) the composition is skewed to acidic residues. A compositionally biased stretch (basic and acidic residues) spans 70–95 (EEGKKDKKIVMEETEEKAGESQEKEA). Positions 99–111 (QEETTVEPQEVTE) are enriched in low complexity. Polar residues-rich tracts occupy residues 118–128 (TQITDSQSVTS) and 172–182 (PEEQQISSPER). A compositionally biased stretch (basic and acidic residues) spans 201-220 (GQERRDLEPENREEGQERTV). 14 WD repeats span residues 341 to 383 (PVHT…IWKW), 391 to 431 (ACTL…AWYE), 442 to 481 (LLTE…VWDI), 499 to 534 (PCKL…FYDH), 537 to 597 (SIVN…VYHL), 601 to 641 (GTKL…VWNY), 647 to 684 (LFSR…ILDA), 694 to 730 (PFKY…MLVV), 737 to 780 (WEYL…GYDL), 791 to 831 (LDIH…LFNA), 837 to 883 (RKTL…ILPV), 889 to 927 (KTSA…QWKI), 965 to 1005 (YFYY…FYPS), and 1025 to 1065 (GKLI…GYTN).

It is found in the cytoplasm. Its subcellular location is the cytoskeleton. The protein resides in the cilium axoneme. The protein localises to the cell projection. It localises to the cilium. It is found in the flagellum. Its function is as follows. Involved in spermatozoa motility. May also regulate cilium motility through its role in the assembly of the axonemal radial spokes. This Pongo abelii (Sumatran orangutan) protein is Cilia- and flagella-associated protein 251.